Consider the following 322-residue polypeptide: Sideroflexin-1 (322 aa).

Ser-2 is subject to N-acetylserine. Topologically, residues 2–102 (SGELPPNINI…MSAQVPMNMT (101 aa)) are mitochondrial matrix. The helical transmembrane segment at 103 to 120 (ITGCMMTFYRTTPAVLFW) threads the bilayer. Over 121-146 (QWINQSFNAVVNYTNRSGDAPLTVNE) the chain is Mitochondrial intermembrane. Residues 147–167 (LGTAYVSATTGAVATALGLNA) traverse the membrane as a helical segment. Residues 168–174 (LTKHVSP) are Mitochondrial matrix-facing. A helical transmembrane segment spans residues 175-195 (LIGRFVPFAAVAAANCINIPL). Residues 196–228 (MRQRELKVGIPVTDENGNRLGESANAAKQAITQ) lie on the Mitochondrial intermembrane side of the membrane. A helical transmembrane segment spans residues 229–249 (VVVSRILMAAPGMAIPPFIMN). Topologically, residues 250 to 266 (TLEKKAFLKRFPWMSAP) are mitochondrial matrix. A helical membrane pass occupies residues 267–287 (IQVGLVGFCLVFATPLCCALF). Residues 288 to 322 (PQKSSMSVTSLEAELQAKIQESHPELRRVYFNKGL) are Mitochondrial intermembrane-facing.

It belongs to the sideroflexin family. Highly expressed in tissues with high one-carbon metabolism activity, such as blood, liver and kidney.

The protein resides in the mitochondrion inner membrane. It catalyses the reaction L-serine(in) = L-serine(out). It carries out the reaction L-alanine(in) = L-alanine(out). The enzyme catalyses L-cysteine(in) = L-cysteine(out). Amino acid transporter importing serine, an essential substrate of the mitochondrial branch of the one-carbon pathway, into mitochondria. Mitochondrial serine is then converted to glycine and formate, which exits to the cytosol where it is used to generate the charged folates that serve as one-carbon donors. May also transport other amino acids including alanine and cysteine. The chain is Sideroflexin-1 from Homo sapiens (Human).